Reading from the N-terminus, the 247-residue chain is tRNA pseudouridine synthase A (247 aa).

The active-site Nucleophile is D53. Y111 serves as a coordination point for substrate.

Belongs to the tRNA pseudouridine synthase TruA family. As to quaternary structure, homodimer.

The catalysed reaction is uridine(38/39/40) in tRNA = pseudouridine(38/39/40) in tRNA. Functionally, formation of pseudouridine at positions 38, 39 and 40 in the anticodon stem and loop of transfer RNAs. This chain is tRNA pseudouridine synthase A, found in Bacillus pumilus (strain SAFR-032).